The chain runs to 102 residues: Thioredoxin (102 aa).

Residues V2–N102 enclose the Thioredoxin domain. Residues C30 and C33 are joined by a disulfide bond.

It belongs to the thioredoxin family.

Participates in various redox reactions through the reversible oxidation of its active center dithiol to a disulfide and catalyzes dithiol-disulfide exchange reactions. The sequence is that of Thioredoxin (trxA) from Mycoplasma genitalium (strain ATCC 33530 / DSM 19775 / NCTC 10195 / G37) (Mycoplasmoides genitalium).